The primary structure comprises 163 residues: Nucleotide-binding protein BLi01194 (163 aa).

Belongs to the YajQ family.

Functionally, nucleotide-binding protein. The chain is Nucleotide-binding protein BLi01194 from Bacillus licheniformis (strain ATCC 14580 / DSM 13 / JCM 2505 / CCUG 7422 / NBRC 12200 / NCIMB 9375 / NCTC 10341 / NRRL NRS-1264 / Gibson 46).